Consider the following 339-residue polypeptide: Photosystem II assembly lipoprotein Ycf48 (339 aa).

A signal peptide spans 1–22 (MVIVKSWQKIFALLVVLLLCIG). Residue C23 is the site of N-palmitoyl cysteine attachment. The S-diacylglycerol cysteine moiety is linked to residue C23.

It belongs to the Ycf48 family. In terms of assembly, part of early PSII assembly complexes which includes D1 (psbA) and PsbI; not found in mature PSII. Binds to the lumenal side of PSII complexes. Interacts with YidC.

It is found in the cellular thylakoid membrane. Its function is as follows. A factor required for optimal assembly of photosystem II (PSII), acting in the early stages of PSII assembly. Also plays a role in replacement of photodamaged D1 (psbA). Assists YidC in synthesis of chlorophyll-binding proteins. This is Photosystem II assembly lipoprotein Ycf48 from Trichormus variabilis (strain ATCC 29413 / PCC 7937) (Anabaena variabilis).